The chain runs to 385 residues: Glucans biosynthesis protein C (385 aa).

The next 10 helical transmembrane spans lie at 17-37 (AWLM…SHTW), 60-80 (MQVF…RYPL), 91-111 (VGIP…IMLQ), 137-157 (ISHL…VWIF), 173-193 (KFSM…YAVI), 212-232 (FIVM…LAFI), 239-259 (LFTT…VAYL), 274-294 (TESV…FSFG), 311-331 (ASLF…AYIT), and 338-358 (WLGF…LYEI).

Belongs to the acyltransferase 3 family. OpgC subfamily.

Its subcellular location is the cell membrane. The protein operates within glycan metabolism; osmoregulated periplasmic glucan (OPG) biosynthesis. Functionally, necessary for the succinyl substitution of periplasmic glucans. Could catalyze the transfer of succinyl residues from the cytoplasmic side of the membrane to the nascent glucan backbones on the periplasmic side of the membrane. In Escherichia coli O45:K1 (strain S88 / ExPEC), this protein is Glucans biosynthesis protein C.